Reading from the N-terminus, the 877-residue chain is Alanine--tRNA ligase (877 aa).

Residues H563, H567, C665, and H669 each coordinate Zn(2+).

Belongs to the class-II aminoacyl-tRNA synthetase family. Zn(2+) is required as a cofactor.

The protein localises to the cytoplasm. The catalysed reaction is tRNA(Ala) + L-alanine + ATP = L-alanyl-tRNA(Ala) + AMP + diphosphate. Catalyzes the attachment of alanine to tRNA(Ala) in a two-step reaction: alanine is first activated by ATP to form Ala-AMP and then transferred to the acceptor end of tRNA(Ala). Also edits incorrectly charged Ser-tRNA(Ala) and Gly-tRNA(Ala) via its editing domain. This is Alanine--tRNA ligase from Thermoanaerobacter pseudethanolicus (strain ATCC 33223 / 39E) (Clostridium thermohydrosulfuricum).